The following is a 176-amino-acid chain: Warthog protein 5 (176 aa).

A signal peptide spans 1 to 21 (MCSMWLMASWLMAFVAGSTLA). N-linked (GlcNAc...) asparagine glycosylation occurs at N70.

In terms of tissue distribution, expressed in seam cells, excretory cell, reproductive system, pharynx, pharyngeal-intestinal valve cells, neurons and neuronal support cells.

The protein resides in the secreted. Its function is as follows. Intercellular signal essential for a variety of patterning events during development. This is Warthog protein 5 (wrt-5) from Caenorhabditis elegans.